The following is a 644-amino-acid chain: Protein cueball (644 aa).

A signal peptide spans 1 to 26 (MIRIRFGMDVLLVLLLATCLLSPTHG). The Extracellular segment spans residues 27–531 (TPLEWDFAVT…VCLTPTVWTS (505 aa)). N-linked (GlcNAc...) asparagine glycosylation is found at N82 and N108. 3 LDL-receptor class B repeats span residues 121–166 (TNLF…DVCR), 167–211 (RKLY…DQLS), and 212–257 (DRLF…TNDA). 2 N-linked (GlcNAc...) asparagine glycosylation sites follow: N175 and N190. The N-linked (GlcNAc...) asparagine glycan is linked to N313. 2 consecutive EGF-like domains span residues 398-430 (EIRECHNYCVHGTCQMSESAYPKCYCQPGFTGE) and 433-471 (EVSVCAGLCLNGGHCRASKEENEAPTCECPAKFGGARCE). 5 disulfide bridges follow: C402–C411, C406–C421, C437–C447, C441–C459, and C461–C470. N473 and N508 each carry an N-linked (GlcNAc...) asparagine glycan. Residues 532 to 552 (SVIIILVVGIVSSLLLVAVIV) form a helical membrane-spanning segment. Topologically, residues 553–644 (HGIRRLYKPK…LIHNMEDDLY (92 aa)) are cytoplasmic.

This sequence belongs to the cueball family.

It localises to the cell membrane. Its function is as follows. Has a role in spermatogenesis and oogenesis. In Drosophila yakuba (Fruit fly), this protein is Protein cueball.